The primary structure comprises 428 residues: uncharacterized protein (428 aa).

The segment at 1–49 is disordered; that stretch reads MRTQTFPPSSSSSRTTHPKKNRHSSNSSSMALVTPAKSSTGAAPKQSSQ. The segment covering 24–49 has biased composition (polar residues); sequence SSNSSSMALVTPAKSSTGAAPKQSSQ.

This is an uncharacterized protein from Caenorhabditis elegans.